A 380-amino-acid chain; its full sequence is Apolipoprotein A-IV (380 aa).

The N-terminal stretch at 1–20 is a signal peptide; it reads MFLKAVVLSLALVAVTGAEA. Repeat copies occupy residues 33-54, 60-81, 82-103, 115-136, 137-158, 159-180, 181-202, 203-224, 225-246, 247-268, 269-286, 287-308, and 309-330. Residues 33–330 are 13 X 22 AA approximate tandem repeats; sequence DYFSQLGNNA…QLDTLRQKLG (298 aa). The segment at 361–380 is disordered; that stretch reads KESQAPALPAQEEMPVPLGG.

The protein belongs to the apolipoprotein A1/A4/E family. In terms of assembly, homodimer. As to expression, secreted in plasma.

The protein resides in the secreted. Functionally, may have a role in chylomicrons and VLDL secretion and catabolism. Required for efficient activation of lipoprotein lipase by ApoC-II; potent activator of LCAT. Apoa-IV is a major component of HDL and chylomicrons. The sequence is that of Apolipoprotein A-IV (APOA4) from Bos taurus (Bovine).